Reading from the N-terminus, the 196-residue chain is uncharacterized protein (196 aa).

Over residues 21–35 (ESRRKDGSVRRERAV) the composition is skewed to basic and acidic residues. 2 disordered regions span residues 21–53 (ESRR…PGRG) and 65–196 (LQLS…KEKE). Over residues 66–75 (QLSNDASTSK) the composition is skewed to polar residues. Composition is skewed to basic and acidic residues over residues 84-94 (ELEKEKLERPL), 100-143 (EKND…KDFK), and 173-196 (KMSK…KEKE).

This is an uncharacterized protein from Schizosaccharomyces pombe (strain 972 / ATCC 24843) (Fission yeast).